We begin with the raw amino-acid sequence, 200 residues long: NADH-quinone oxidoreductase subunit C (200 aa).

It belongs to the complex I 30 kDa subunit family. As to quaternary structure, NDH-1 is composed of 14 different subunits. Subunits NuoB, C, D, E, F, and G constitute the peripheral sector of the complex.

Its subcellular location is the cell inner membrane. The enzyme catalyses a quinone + NADH + 5 H(+)(in) = a quinol + NAD(+) + 4 H(+)(out). In terms of biological role, NDH-1 shuttles electrons from NADH, via FMN and iron-sulfur (Fe-S) centers, to quinones in the respiratory chain. The immediate electron acceptor for the enzyme in this species is believed to be ubiquinone. Couples the redox reaction to proton translocation (for every two electrons transferred, four hydrogen ions are translocated across the cytoplasmic membrane), and thus conserves the redox energy in a proton gradient. The polypeptide is NADH-quinone oxidoreductase subunit C (Rhizobium rhizogenes (strain K84 / ATCC BAA-868) (Agrobacterium radiobacter)).